A 198-amino-acid chain; its full sequence is MKVTKADIVISAVKPEQYPDSDLPEIALAGRSNVGKSSFINKILNRKKLVRISSKPGKTQTLNFFLINEMMHFVDVPGYGYAKVSKSERAAWGKMIETYFTTREQLDAAVLVVDLRHQPTSDDVMMYDFLKHYEIPTIIIATKADKIPKGKWQKHLKVVKETLAVEIGDEIVLFSSETGLGKEEAWKAIHKFTKTKNA.

One can recognise an EngB-type G domain in the interval Asp22–Thr195. Residues Gly30–Ser37, Gly57–Thr61, Asp75–Gly78, Thr142–Asp145, and Phe174–Ser176 each bind GTP. Residues Ser37 and Thr59 each contribute to the Mg(2+) site.

This sequence belongs to the TRAFAC class TrmE-Era-EngA-EngB-Septin-like GTPase superfamily. EngB GTPase family. Mg(2+) is required as a cofactor.

Functionally, necessary for normal cell division and for the maintenance of normal septation. In Bacillus cereus (strain B4264), this protein is Probable GTP-binding protein EngB.